The primary structure comprises 149 residues: 3-dehydroquinate dehydratase (149 aa).

The Proton acceptor role is filled by tyrosine 26. The substrate site is built by asparagine 78, histidine 84, and aspartate 91. The active-site Proton donor is the histidine 104. Residues 105-106 and arginine 115 contribute to the substrate site; that span reads LS.

Belongs to the type-II 3-dehydroquinase family. As to quaternary structure, homododecamer.

It catalyses the reaction 3-dehydroquinate = 3-dehydroshikimate + H2O. It participates in metabolic intermediate biosynthesis; chorismate biosynthesis; chorismate from D-erythrose 4-phosphate and phosphoenolpyruvate: step 3/7. Functionally, catalyzes a trans-dehydration via an enolate intermediate. In Polynucleobacter necessarius subsp. necessarius (strain STIR1), this protein is 3-dehydroquinate dehydratase.